A 124-amino-acid polypeptide reads, in one-letter code: Large ribosomal subunit protein uL18 (124 aa).

It belongs to the universal ribosomal protein uL18 family. In terms of assembly, part of the 50S ribosomal subunit; part of the 5S rRNA/L5/L18/L25 subcomplex. Contacts the 5S and 23S rRNAs.

This is one of the proteins that bind and probably mediate the attachment of the 5S RNA into the large ribosomal subunit, where it forms part of the central protuberance. In Orientia tsutsugamushi (strain Ikeda) (Rickettsia tsutsugamushi), this protein is Large ribosomal subunit protein uL18.